The primary structure comprises 495 residues: N-succinylglutamate 5-semialdehyde dehydrogenase (495 aa).

NAD(+) is bound at residue 228 to 233; it reads GSYATG. Residues glutamate 251 and cysteine 285 contribute to the active site.

It belongs to the aldehyde dehydrogenase family. AstD subfamily.

The enzyme catalyses N-succinyl-L-glutamate 5-semialdehyde + NAD(+) + H2O = N-succinyl-L-glutamate + NADH + 2 H(+). The protein operates within amino-acid degradation; L-arginine degradation via AST pathway; L-glutamate and succinate from L-arginine: step 4/5. Its function is as follows. Catalyzes the NAD-dependent reduction of succinylglutamate semialdehyde into succinylglutamate. The chain is N-succinylglutamate 5-semialdehyde dehydrogenase from Legionella pneumophila (strain Paris).